The sequence spans 210 residues: ATP phosphoribosyltransferase (210 aa).

This sequence belongs to the ATP phosphoribosyltransferase family. Short subfamily. Heteromultimer composed of HisG and HisZ subunits.

It localises to the cytoplasm. It carries out the reaction 1-(5-phospho-beta-D-ribosyl)-ATP + diphosphate = 5-phospho-alpha-D-ribose 1-diphosphate + ATP. It participates in amino-acid biosynthesis; L-histidine biosynthesis; L-histidine from 5-phospho-alpha-D-ribose 1-diphosphate: step 1/9. Its function is as follows. Catalyzes the condensation of ATP and 5-phosphoribose 1-diphosphate to form N'-(5'-phosphoribosyl)-ATP (PR-ATP). Has a crucial role in the pathway because the rate of histidine biosynthesis seems to be controlled primarily by regulation of HisG enzymatic activity. This chain is ATP phosphoribosyltransferase, found in Bacillus cytotoxicus (strain DSM 22905 / CIP 110041 / 391-98 / NVH 391-98).